The primary structure comprises 1194 residues: ATP-dependent RNA helicase DHX30 (1194 aa).

The span at 1 to 10 (MFTLDSFRKD) shows a compositional bias: basic and acidic residues. Residues 1–27 (MFTLDSFRKDRTQHRQRQCKLPPPRLP) are disordered. The residue at position 6 (Ser6) is a Phosphoserine. One can recognise a DRBM domain in the interval 53-121 (PKNLLNSVIG…QAAAAACQLF (69 aa)). A disordered region spans residues 153–200 (WWRPEPTMPPTSWRQLNPENIRPAGTGGLSRSLGREEEEDEEEELEEG). Over residues 188–200 (EEEEDEEEELEEG) the composition is skewed to acidic residues. Phosphoserine occurs at positions 226 and 380. Residues 444-612 (LSAIEQHPVV…FGGCPVIKVP (169 aa)) enclose the Helicase ATP-binding domain. 457–464 (GDTGCGKT) provides a ligand contact to ATP. The DEAH box motif lies at 559 to 562 (DEVH). One can recognise a Helicase C-terminal domain in the interval 654 to 827 (LVTDLVLHID…NLVLQAKIHM (174 aa)).

It belongs to the DEAD box helicase family. DEAH subfamily. In terms of assembly, identified in a complex with TFAM and SSBP1. Interacts (via N-terminus) with ZC3HAV1 (via N-terminal domain) in an RNA-independent manner. Found in a complex with GRSF1, DDX28, FASTKD2 and FASTKD5.

It localises to the cytoplasm. It is found in the mitochondrion. Its subcellular location is the mitochondrion matrix. The protein resides in the mitochondrion nucleoid. The catalysed reaction is ATP + H2O = ADP + phosphate + H(+). In terms of biological role, RNA-dependent helicase. Plays an important role in the assembly of the mitochondrial large ribosomal subunit. Associates with mitochondrial DNA. Required for optimal function of the zinc-finger antiviral protein ZC3HAV1. Involved in nervous system development and differentiation through its involvement in the up-regulation of a number of genes which are required for neurogenesis, including GSC, NCAM1, neurogenin, and NEUROD. The sequence is that of ATP-dependent RNA helicase DHX30 (Dhx30) from Rattus norvegicus (Rat).